A 154-amino-acid chain; its full sequence is Catabolic 3-dehydroquinase (154 aa).

The active-site Proton acceptor is Y25. Positions 79, 85, and 92 each coordinate substrate. The active-site Proton donor is the H105. Residues 106–107 and R116 contribute to the substrate site; that span reads IS.

It belongs to the type-II 3-dehydroquinase family. In terms of assembly, homododecamer. Adopts a ring-like structure, composed of an arrangement of two hexameric rings stacked on top of one another.

It catalyses the reaction 3-dehydroquinate = 3-dehydroshikimate + H2O. It functions in the pathway aromatic compound metabolism; 3,4-dihydroxybenzoate biosynthesis; 3,4-dihydroxybenzoate from 3-dehydroquinate: step 1/2. Is involved in the catabolism of quinate. Allows the utilization of quinate as carbon source via the beta-ketoadipate pathway. This is Catabolic 3-dehydroquinase from Sclerotinia sclerotiorum (strain ATCC 18683 / 1980 / Ss-1) (White mold).